The chain runs to 410 residues: Exodeoxyribonuclease 7 large subunit (410 aa).

It belongs to the XseA family. Heterooligomer composed of large and small subunits.

The protein resides in the cytoplasm. The catalysed reaction is Exonucleolytic cleavage in either 5'- to 3'- or 3'- to 5'-direction to yield nucleoside 5'-phosphates.. Its function is as follows. Bidirectionally degrades single-stranded DNA into large acid-insoluble oligonucleotides, which are then degraded further into small acid-soluble oligonucleotides. This Alkaliphilus metalliredigens (strain QYMF) protein is Exodeoxyribonuclease 7 large subunit.